The sequence spans 534 residues: Zinc finger protein 397 (534 aa).

Position 31 is a phosphoserine (S31). The 83-residue stretch at 50–132 (RQQFRKFCYQ…TLLEDLEREF (83 aa)) folds into the SCAN box domain. Glycyl lysine isopeptide (Lys-Gly) (interchain with G-Cter in SUMO2) cross-links involve residues K55, K171, K202, and K252. Positions 197-242 (DISGEKSQRLSQEPSFGGFSEHKSSLEWQQGSAPGETLRRSPSQRA) are disordered. C2H2-type zinc fingers lie at residues 285–307 (YRCD…QRIH), 313–335 (YKCN…QRIH), 341–363 (YECS…RKIH), 369–391 (CKCN…QRIH), 397–419 (YECN…QRIH), 425–447 (YECN…QRIH), 453–475 (YECN…QRIH), 481–503 (YQCN…QRIH), and 509–531 (YICS…QRVH).

The protein belongs to the krueppel C2H2-type zinc-finger protein family.

It is found in the nucleus. In terms of biological role, DNA-dependent transcriptional repressor. This Bos taurus (Bovine) protein is Zinc finger protein 397 (ZNF397).